A 621-amino-acid polypeptide reads, in one-letter code: Pentatricopeptide repeat-containing protein At3g48250, chloroplastic (621 aa).

The N-terminal 67 residues, 1-67 (MYRSMAILSS…SKPDSMLQLV (67 aa)), are a transit peptide targeting the chloroplast. PPR repeat units follow at residues 122 to 156 (STPL…GFYL), 157 to 194 (DEDT…NAMS), 262 to 296 (STVT…GYDM), 297 to 331 (DLDT…PFKP), 332 to 368 (SIQD…GKSL), 369 to 403 (SKAV…GYEP), 404 to 438 (DNIT…GCFP), 439 to 473 (DIKT…GFDI), 474 to 509 (DSNL…NVKP), and 510 to 544 (WQST…NYPA).

It belongs to the PPR family. P subfamily.

It is found in the plastid. The protein resides in the chloroplast. The polypeptide is Pentatricopeptide repeat-containing protein At3g48250, chloroplastic (Arabidopsis thaliana (Mouse-ear cress)).